Reading from the N-terminus, the 960-residue chain is Glycine dehydrogenase (decarboxylating) (960 aa).

The residue at position 709 (Lys709) is an N6-(pyridoxal phosphate)lysine.

This sequence belongs to the GcvP family. As to quaternary structure, the glycine cleavage system is composed of four proteins: P, T, L and H. It depends on pyridoxal 5'-phosphate as a cofactor.

It catalyses the reaction N(6)-[(R)-lipoyl]-L-lysyl-[glycine-cleavage complex H protein] + glycine + H(+) = N(6)-[(R)-S(8)-aminomethyldihydrolipoyl]-L-lysyl-[glycine-cleavage complex H protein] + CO2. Functionally, the glycine cleavage system catalyzes the degradation of glycine. The P protein binds the alpha-amino group of glycine through its pyridoxal phosphate cofactor; CO(2) is released and the remaining methylamine moiety is then transferred to the lipoamide cofactor of the H protein. The polypeptide is Glycine dehydrogenase (decarboxylating) (Edwardsiella ictaluri (strain 93-146)).